The primary structure comprises 1774 residues: Kinesin-like protein KIF20B (1774 aa).

Positions 58 to 477 (YLQVCLRIRP…LKFSTTAQRV (420 aa)) constitute a Kinesin motor domain. 152-159 (GLTNSGKT) provides a ligand contact to ATP. Residue Ser-486 is modified to Phosphoserine. Coiled coils occupy residues 525–601 (EDVL…KIRE) and 705–747 (QEAI…LVQA). Positions 538–555 (EENEETQNMETELTDEDS) are enriched in acidic residues. 2 disordered regions span residues 538-557 (EENEETQNMETELTDEDSDK) and 740-799 (ESNS…PPAK). Residues 741–778 (SNSLVQALKTSSKVDTSLTSNKSTCNETSEMPKNSRAQ) show a composition bias toward polar residues. Basic and acidic residues predominate over residues 779 to 788 (THSERKRLNE). A coiled-coil region spans residues 824–946 (SEVVEGNRVL…QMQTKIDELR (123 aa)). Position 950 is a phosphoserine (Ser-950). The segment at 1002-1059 (ENSFHASIEAIWEECKEIVKASSKKSHQIQGLEEQIEKLQVEVKGYREENSDLRAQES) is necessary and sufficient for interaction with SHTN1. Residues 1021–1507 (KASSKKSHQI…DEEIQELRKA (487 aa)) are a coiled coil. Residues Ser-1107 and Ser-1542 each carry the phosphoserine modification. The segment at 1514–1774 (TENQTMNPKP…KRRLRTRTAK (261 aa)) is interaction with PIN1. Thr-1598 carries the phosphothreonine; by CDK1 modification. A Phosphoserine modification is found at Ser-1612. Residues 1625–1663 (KKNSTPRSNVKFPVSEHRNSPVKKEQKVSVGPSSKKTYS) are disordered. A compositionally biased stretch (basic and acidic residues) spans 1638-1651 (VSEHRNSPVKKEQK). Ser-1669 and Ser-1694 each carry phosphoserine.

It belongs to the TRAFAC class myosin-kinesin ATPase superfamily. Kinesin family. As to quaternary structure, oligomerizes (via kinesin motor domain). Associates with microtubules. Interacts (via C-terminal globular tail region) with PIN1 (via WW domain). Interacts with PRC1. Interacts with SHTN1 (via N-terminus); the interaction is direct and promotes the association of SHTN1 to microtubules in primary neurons. Associates with microtubules. In terms of processing, phosphorylated during mitosis by CDK1. Expressed in the brain (at protein level).

The protein resides in the nucleus. Its subcellular location is the cytoplasm. It is found in the cytoskeleton. It localises to the microtubule organizing center. The protein localises to the centrosome. The protein resides in the nucleolus. Its subcellular location is the nucleoplasm. It is found in the spindle. It localises to the spindle pole. The protein localises to the midbody. The protein resides in the cell projection. Its subcellular location is the axon. It is found in the growth cone. In terms of biological role, plus-end-directed motor enzyme that is required for completion of cytokinesis. Required for proper midbody organization and abscission in polarized cortical stem cells. Plays a role in the regulation of neuronal polarization by mediating the transport of specific cargos. Participates in the mobilization of SHTN1 and in the accumulation of PIP3 in the growth cone of primary hippocampal neurons in a tubulin and actin-dependent manner. In the developing telencephalon, cooperates with SHTN1 to promote both the transition from the multipolar to the bipolar stage and the radial migration of cortical neurons from the ventricular zone toward the superficial layer of the neocortex. Involved in cerebral cortex growth. Acts as an oncogene for promoting bladder cancer cells proliferation, apoptosis inhibition and carcinogenic progression. In Mus musculus (Mouse), this protein is Kinesin-like protein KIF20B.